Reading from the N-terminus, the 258-residue chain is Snake venom serine protease catroxase-2 (258 aa).

The first 18 residues, 1–18 (MVLIRVLANLLILQLSYA), serve as a signal peptide directing secretion. Positions 19–24 (QKSSEL) are excised as a propeptide. The region spanning 25–249 (VVGGDECNIN…YNDWIQSIIA (225 aa)) is the Peptidase S1 domain. Intrachain disulfides connect cysteine 31/cysteine 163, cysteine 50/cysteine 66, cysteine 98/cysteine 256, cysteine 142/cysteine 210, cysteine 174/cysteine 189, and cysteine 200/cysteine 225. Asparagine 44 carries an N-linked (GlcNAc...) asparagine glycan. Residues histidine 65 and aspartate 110 each act as charge relay system in the active site. The active-site Charge relay system is serine 204.

It belongs to the peptidase S1 family. Snake venom subfamily. Monomer. Expressed by the venom gland.

The protein resides in the secreted. Functionally, snake venom serine protease that may act in the hemostasis system of the prey. The sequence is that of Snake venom serine protease catroxase-2 from Crotalus atrox (Western diamondback rattlesnake).